A 246-amino-acid chain; its full sequence is Small ribosomal subunit protein uS2 (246 aa).

It belongs to the universal ribosomal protein uS2 family.

This Burkholderia vietnamiensis (strain G4 / LMG 22486) (Burkholderia cepacia (strain R1808)) protein is Small ribosomal subunit protein uS2.